We begin with the raw amino-acid sequence, 219 residues long: Transmembrane protein 17B (219 aa).

N26 carries N-linked (GlcNAc...) asparagine glycosylation. 4 consecutive transmembrane segments (helical) span residues 51–71 (MMLY…IITM), 84–104 (ILLT…LYIG), 116–136 (LAGF…FLLT), and 147–167 (LAVH…SFLV). N-linked (GlcNAc...) asparagine glycans are attached at residues N195 and N203.

Belongs to the TMEM17 family. In terms of assembly, part of the tectonic-like complex (also named B9 complex).

The protein resides in the cell projection. The protein localises to the cilium membrane. Transmembrane component of the tectonic-like complex, a complex localized at the transition zone of primary cilia and acting as a barrier that prevents diffusion of transmembrane proteins between the cilia and plasma membranes. Required for ciliogenesis and sonic hedgehog/SHH signaling. This chain is Transmembrane protein 17B (Tmem17-b), found in Xenopus tropicalis (Western clawed frog).